The following is a 1005-amino-acid chain: Sorbin and SH3 domain-containing protein 1 homolog (1005 aa).

Disordered regions lie at residues 1-31 (MMHH…PAAD), 61-86 (LDMK…STPS), 99-153 (YVDP…PHSA), 243-292 (NELK…FNSE), 386-409 (FEEK…FKND), 427-475 (TTKN…TAAA), and 542-622 (MHRK…SNEE). The segment covering 11–25 (NLANSSEPQQPSGQY) has biased composition (polar residues). Residues 260–269 (VMTSSTENLK) are compositionally biased toward polar residues. Positions 270–279 (NGNNQQNQQP) are enriched in low complexity. Positions 392-409 (RSPMTSTPSYKEQGFKND) are enriched in polar residues. Over residues 448 to 475 (SDTYPVSSSTTSTWPSHTTTPTTTTAAA) the composition is skewed to low complexity. The region spanning 499 to 567 (VMSTNMDEPI…FINPSNVTDG (69 aa)) is the SoHo domain. The span at 544 to 557 (RKGEDGSNEGKEQH) shows a compositional bias: basic and acidic residues. The span at 559-589 (INPSNVTDGIGRTTPTASNLGRSRENLSFNQ) shows a compositional bias: polar residues. Residues 610–642 (YNNQERVKQSNEEELLRLKAEKLAEELRKEKER) are a coiled coil. SH3 domains lie at 683–742 (QPVM…INTG), 745–805 (GDSQ…PIEQ), and 946–1005 (KGSE…VKRH).

In terms of assembly, may interact with deb-1. In terms of tissue distribution, expressed in body wall muscles, muscle arm attachment sites at the nerve ring, all non-striated muscles, and distal tip cells of the gonad. Highly expressed in the origins and insertions of the vulval and anal depressor muscles and the spicule-associated and diagonal muscles of the male tail. Expressed in small puncta throughout the uterus, stomatointestinal muscle and proximal gonadal sheath tissues. Not expressed in the pharynx.

The protein resides in the cell junction. The protein localises to the adherens junction. It localises to the cell membrane. It is found in the focal adhesion. Required for organization of sarcomeres in body wall muscles and for maintaining normal mitochondrial position in myocytes. The chain is Sorbin and SH3 domain-containing protein 1 homolog from Caenorhabditis elegans.